We begin with the raw amino-acid sequence, 49 residues long: Large ribosomal subunit protein bL33 (49 aa).

Belongs to the bacterial ribosomal protein bL33 family.

In Carboxydothermus hydrogenoformans (strain ATCC BAA-161 / DSM 6008 / Z-2901), this protein is Large ribosomal subunit protein bL33.